The sequence spans 228 residues: Probable septum site-determining protein MinC (228 aa).

This sequence belongs to the MinC family. Interacts with MinD and FtsZ.

In terms of biological role, cell division inhibitor that blocks the formation of polar Z ring septums. Rapidly oscillates between the poles of the cell to destabilize FtsZ filaments that have formed before they mature into polar Z rings. Prevents FtsZ polymerization. The chain is Probable septum site-determining protein MinC from Bacillus cytotoxicus (strain DSM 22905 / CIP 110041 / 391-98 / NVH 391-98).